Reading from the N-terminus, the 407-residue chain is Arginine deiminase (407 aa).

The active-site Amidino-cysteine intermediate is the Cys-397.

This sequence belongs to the arginine deiminase family.

Its subcellular location is the cytoplasm. It carries out the reaction L-arginine + H2O = L-citrulline + NH4(+). Its pathway is amino-acid degradation; L-arginine degradation via ADI pathway; carbamoyl phosphate from L-arginine: step 1/2. This is Arginine deiminase from Escherichia coli O81 (strain ED1a).